The following is a 1050-amino-acid chain: Zinc finger and BTB domain-containing protein 11 (1050 aa).

Residues 143-156 (LDSGEESNESEDDL) show a composition bias toward acidic residues. The disordered stretch occupies residues 143 to 173 (LDSGEESNESEDDLSNFTSPPSTASKSSKKK). The span at 157 to 168 (SNFTSPPSTASK) shows a compositional bias: low complexity. Positions 214–282 (CDVTLLIEGE…AYTSVLSFDF (69 aa)) constitute a BTB domain. Disordered stretches follow at residues 373 to 514 (AEQN…EGGY) and 543 to 563 (LVQR…STEE). Residues 378–399 (EPEQQPAPQASPEAEASVSPVE) show a composition bias toward low complexity. 2 stretches are compositionally biased toward basic and acidic residues: residues 478–501 (SKDE…DTYR) and 553–563 (PKRDAKESTEE). C2H2-type zinc fingers lie at residues 566–588 (HKCG…TLKH) and 594–616 (YKCP…LIRH). A disordered region spans residues 617-641 (TRKEAPTSSSSNSTSTEASGGSSEK). Low complexity predominate over residues 623-638 (TSSSSNSTSTEASGGS). 10 C2H2-type zinc fingers span residues 648 to 670 (FICS…MLKH), 676 to 698 (HACQ…QSLH), 704 to 726 (FQCE…MSIH), 732 to 754 (YFCS…LKKH), 763 to 785 (YHCT…MNKH), 791 to 813 (FQCQ…VKSH), 819 to 843 (YRCN…KATH), 855 to 877 (RVCD…MNNH), 883 to 905 (FECL…VRTH), and 911 to 934 (YVCP…TKFH).

It localises to the nucleus. The protein resides in the nucleolus. May be involved in transcriptional regulation. The sequence is that of Zinc finger and BTB domain-containing protein 11 from Mus musculus (Mouse).